A 365-amino-acid chain; its full sequence is MIRAFDALSLPVLRWLDPEDAHRLAIQGLRFLPPVKPRADDPKLAVRAFGLNFPNPIGMAAGFDKSAEVPDALLRLGFGFVEIGSVTPKPQSGNPRPRLFRLERDEAVINRMGFNNDGADVALRRLAARAQHGGIVGVNVGANKDSPDRVGDYVKLIEAFAPVASYFTINVSSPNTPGLRNLQEGALLDDLLARVIDARERVRQKAGDTPVLLKIAPDLSLAQLDDVVQVARSRRVDGMIVSNTTIARPSTLREEMRAKEQGGLSGRPLFRLSTRMVAETYVRVEGAFPLVGVGGVDSGGAALTKIRAGASLIQLYSSLVYKGLGLVEEIKRDLTSTLLRTGRDSLSDIVGADAATLTAEDWPGM.

FMN-binding positions include 61 to 65 and serine 85; that span reads AGFDK. Substrate is bound at residue lysine 65. 110–114 serves as a coordination point for substrate; that stretch reads NRMGF. Positions 139 and 170 each coordinate FMN. Asparagine 170 serves as a coordination point for substrate. The active-site Nucleophile is the serine 173. Asparagine 175 contributes to the substrate binding site. FMN-binding residues include lysine 214 and serine 242. 243-244 contributes to the substrate binding site; that stretch reads NT. FMN contacts are provided by residues glycine 266, glycine 295, and 316–317; that span reads YS.

It belongs to the dihydroorotate dehydrogenase family. Type 2 subfamily. As to quaternary structure, monomer. Requires FMN as cofactor.

It is found in the cell membrane. The catalysed reaction is (S)-dihydroorotate + a quinone = orotate + a quinol. It functions in the pathway pyrimidine metabolism; UMP biosynthesis via de novo pathway; orotate from (S)-dihydroorotate (quinone route): step 1/1. Functionally, catalyzes the conversion of dihydroorotate to orotate with quinone as electron acceptor. The polypeptide is Dihydroorotate dehydrogenase (quinone) (Bradyrhizobium diazoefficiens (strain JCM 10833 / BCRC 13528 / IAM 13628 / NBRC 14792 / USDA 110)).